Here is a 428-residue protein sequence, read N- to C-terminus: D-serine dehydratase (428 aa).

The residue at position 57 (lysine 57) is an N6-(pyridoxal phosphate)lysine. Pyridoxal 5'-phosphate-binding residues include tyrosine 203, tyrosine 210, threonine 255, glycine 286, and asparagine 287. Residues histidine 398 and cysteine 400 each contribute to the Zn(2+) site.

Belongs to the DSD1 family. In terms of assembly, homodimer. Requires pyridoxal 5'-phosphate as cofactor. Zn(2+) is required as a cofactor.

The catalysed reaction is D-serine = pyruvate + NH4(+). With respect to regulation, sodium cyanoborohydride, N-ethylmaleimide, hydroxylamine, phenyhydrazin and EDTA are inhibitors of the catalytic activity. In terms of biological role, catalyzes the conversion of D-serine to pyruvate and ammonia. May play a role in D-serine detoxification. The sequence is that of D-serine dehydratase from Saccharomyces cerevisiae (strain ATCC 204508 / S288c) (Baker's yeast).